The primary structure comprises 205 residues: MSRFTGPRLKIMRALGVDLPGLSRKTIASRPTPPGQHGAKLVRRRKSDFGIKLQEKQKLRFNYGLSERQLRHLMLNARKSTEPTGETLLQLLERRLDNVVFRAGFAPTVIAARQLVSHRHVRLNGKPVNIPSIRLNVGDEITIKPESLNLPIVLGTLQDLPLSRPEWLLWDEKDKTGKITHLPTAEDVPFPIDVQQVVEYYANRM.

Positions 94–157 constitute an S4 RNA-binding domain; sequence RRLDNVVFRA…LNLPIVLGTL (64 aa).

It belongs to the universal ribosomal protein uS4 family. Part of the 30S ribosomal subunit. Contacts protein S5. The interaction surface between S4 and S5 is involved in control of translational fidelity.

Functionally, one of the primary rRNA binding proteins, it binds directly to 16S rRNA where it nucleates assembly of the body of the 30S subunit. In terms of biological role, with S5 and S12 plays an important role in translational accuracy. This is Small ribosomal subunit protein uS4B from Nitrosomonas europaea (strain ATCC 19718 / CIP 103999 / KCTC 2705 / NBRC 14298).